Reading from the N-terminus, the 126-residue chain is C-type natriuretic peptide 2 (126 aa).

Residues 1-22 (MAVCSSSSLILLTVFLSVAVET) form the signal peptide. A propeptide spanning residues 23 to 102 (RPSSDRDEEQ…REKTRRWGRK (80 aa)) is cleaved from the precursor. The tract at residues 44-80 (SLILAPPTSNDSTEGSSGSPEPPTPSEAPVLIHGDRG) is disordered. A disulfide bond links Cys-110 and Cys-126.

The protein belongs to the natriuretic peptide family. Brain and spinal cord.

It localises to the secreted. Exhibits natriuretic and vasodepressant activity. Has cGMP-stimulating activity. May help to regulate body fluid homeostasis in a variety of aquatic environments. This Oryzias latipes (Japanese rice fish) protein is C-type natriuretic peptide 2.